Reading from the N-terminus, the 406-residue chain is Uronyl 2-sulfotransferase (406 aa).

Residues 1–49 are Cytoplasmic-facing; it reads MKKKQQHPGGGADPWPHGAPMGGAPPGLGSWKRRVPLLPFLRFSLRDYG. A helical; Signal-anchor for type II membrane protein transmembrane segment spans residues 50–70; that stretch reads FCMATLLVFCLGSLLYQLSGG. Over 71-406 the chain is Lumenal; it reads PPRFLLDLRQ…EKWLEDIYKR (336 aa). Residues Asn84, Asn140, and Asn155 are each glycosylated (N-linked (GlcNAc...) asparagine). His168 is a catalytic residue. N-linked (GlcNAc...) asparagine glycosylation is found at Asn173 and Asn319. A compositionally biased stretch (acidic residues) spans 387–399; the sequence is EPIDDEEQDDEKW. The tract at residues 387–406 is disordered; sequence EPIDDEEQDDEKWLEDIYKR.

It belongs to the sulfotransferase 3 family. In terms of tissue distribution, widely expressed.

The protein resides in the golgi apparatus membrane. Functionally, sulfotransferase that catalyzes the transfer of sulfate to the position 2 of uronyl residues in glycosaminoglycan chains. Has mainly activity toward iduronyl residues in dermatan sulfate, and weaker activity toward glucuronyl residues of chondroitin sulfate. Has little to no activity toward desulfated N-resulfated heparin or N-sulfoheparosan. The polypeptide is Uronyl 2-sulfotransferase (Homo sapiens (Human)).